Reading from the N-terminus, the 501-residue chain is Ribose import ATP-binding protein RbsA 1 (501 aa).

ABC transporter domains lie at 5–241 and 252–495; these read LQLK…VGRK and APGD…VGKL. An ATP-binding site is contributed by 37-44; sequence GENGAGKS.

It belongs to the ABC transporter superfamily. Ribose importer (TC 3.A.1.2.1) family. In terms of assembly, the complex is composed of an ATP-binding protein (RbsA), two transmembrane proteins (RbsC) and a solute-binding protein (RbsB).

It is found in the cell inner membrane. It catalyses the reaction D-ribose(out) + ATP + H2O = D-ribose(in) + ADP + phosphate + H(+). Part of the ABC transporter complex RbsABC involved in ribose import. Responsible for energy coupling to the transport system. The polypeptide is Ribose import ATP-binding protein RbsA 1 (Escherichia coli O157:H7).